Reading from the N-terminus, the 119-residue chain is Large ribosomal subunit protein bL20 (119 aa).

This sequence belongs to the bacterial ribosomal protein bL20 family.

Binds directly to 23S ribosomal RNA and is necessary for the in vitro assembly process of the 50S ribosomal subunit. It is not involved in the protein synthesizing functions of that subunit. This Xanthomonas campestris pv. campestris (strain 8004) protein is Large ribosomal subunit protein bL20.